A 114-amino-acid polypeptide reads, in one-letter code: Amphinase-4 (114 aa).

The active-site Proton acceptor is H15. 4 disulfides stabilise this stretch: C26–C79, C41–C85, C59–C100, and C97–C114. The N-linked (GlcNAc...) asparagine glycan is linked to N27. Substrate is bound at residue K42 to T46. N-linked (GlcNAc...) asparagine glycosylation is found at N67 and N91. The Proton donor role is filled by H107.

This sequence belongs to the pancreatic ribonuclease family. In terms of assembly, monomer. Post-translationally, there are at least five different forms arising from glycan heterogeneity.

Its subcellular location is the secreted. Endonuclease, hydrolyzes highly polymerized RNA, poly(U) and poly(C), and the dinucleotides CpA and UpA. Hydrolyzes rCA, rUA and rUG. Has cytotoxic activity against cultured human submaxillary gland carcinoma cells. The polypeptide is Amphinase-4 (Lithobates pipiens (Northern leopard frog)).